The following is a 553-amino-acid chain: MATDTSQGELVHPKALPLIVGAQLIHADKLGEKVEDSTMPIRRTVNSTRETPPKSKLAEGEEEKPEPDISSEESVSTVEEQENETPPATSSEAEQPKGEPENEEKEENKSSEETKKDEKDQSKEKEKKVKKTIPSWATLSASQLARAQKQTPMASSPRPKMDAILTEAIKACFQKSGASVVAIRKYIIHKYPSLELERRGYLLKQALKRELNRGVIKQVKGKGASGSFVVVQKSRKTPQKSRNRKNRSSAVDPEPQVKLEDVLPLAFTRLCEPKEASYSLIRKYVSQYYPKLRVDIRPQLLKNALQRAVERGQLEQITGKGASGTFQLKKSGEKPLLGGSLMEYAILSAIAAMNEPKTCSTTALKKYVLENHPGTNSNYQMHLLKKTLQKCEKNGWMEQISGKGFSGTFQLCFPYYPSPGVLFPKKEPDDSRDEDEDEDESSEEDSEDEEPPPKRRLQKKTPAKSPGKAASVKQRGSKPAPKVSAAQRGKARPLPKKAPPKAKTPAKKTRPSSTVIKKPSGGSSKKPATSARKEVKLPGKGKSTMKKSFRVKK.

Ala-2 bears the N-acetylalanine mark. Ser-6 bears the Phosphoserine mark. 2 disordered regions span residues 29 to 134 (KLGE…KTIP) and 140 to 159 (SASQ…SPRP). Thr-51 carries the post-translational modification Phosphothreonine. Positions 60 to 71 (GEEEKPEPDISS) are enriched in acidic residues. Lys-64 is covalently cross-linked (Glycyl lysine isopeptide (Lys-Gly) (interchain with G-Cter in SUMO2)). Thr-85 is subject to Phosphothreonine. Over residues 94–127 (EQPKGEPENEEKEENKSSEETKKDEKDQSKEKEK) the composition is skewed to basic and acidic residues. Residue Lys-97 forms a Glycyl lysine isopeptide (Lys-Gly) (interchain with G-Cter in SUMO2) linkage. The span at 140–154 (SASQLARAQKQTPMA) shows a compositional bias: polar residues. 3 positions are modified to phosphoserine: Ser-142, Ser-155, and Ser-156. The region spanning 157–232 (PRPKMDAILT…GASGSFVVVQ (76 aa)) is the H15 1 domain. Position 190 is an N6-acetyllysine (Lys-190). The disordered stretch occupies residues 230–255 (VVQKSRKTPQKSRNRKNRSSAVDPEP). A compositionally biased stretch (basic residues) spans 233-247 (KSRKTPQKSRNRKNR). Ser-248 and Ser-249 each carry phosphoserine. The short motif at 255 to 259 (PQVKL) is the PxVxL motif element. 2 consecutive H15 domains span residues 255 to 330 (PQVK…QLKK) and 337 to 413 (LGGS…QLCF). Lys-258 participates in a covalent cross-link: Glycyl lysine isopeptide (Lys-Gly) (interchain with G-Cter in SUMO2). The interval 422-553 (LFPKKEPDDS…TMKKSFRVKK (132 aa)) is disordered. Residues 430–450 (DSRDEDEDEDESSEEDSEDEE) show a composition bias toward acidic residues. Ser-441, Ser-442, and Ser-446 each carry phosphoserine. The span at 489 to 510 (GKARPLPKKAPPKAKTPAKKTR) shows a compositional bias: basic residues. The segment covering 517–527 (KKPSGGSSKKP) has biased composition (low complexity). Basic residues predominate over residues 543–553 (STMKKSFRVKK).

In terms of assembly, interacts (via PxVxL motif) with CBX5 (via Trp-174).

It localises to the nucleus. The protein resides in the chromosome. Its function is as follows. Component of heterochromatin that maintains heterochromatin integrity during G1/S progression and regulates the duration of G1 phase to critically influence cell proliferative capacity. Mediates chromatin condensation during hypoxia, leading to increased tumor cell viability, radio-resistance, chemo-resistance and self-renewal. This Homo sapiens (Human) protein is Heterochromatin protein 1-binding protein 3 (HP1BP3).